An 84-amino-acid polypeptide reads, in one-letter code: MNYLVMISFALLLMTGVESVRDAYIAKPHNCVYECARNEYCNDLCTKNGAKSGYCQWVGKYGNGCWCIELPDNVPIRVPGKCHR.

The signal sequence occupies residues 1–19 (MNYLVMISFALLLMTGVES). Positions 21 to 83 (RDAYIAKPHN…VPIRVPGKCH (63 aa)) constitute an LCN-type CS-alpha/beta domain. Disulfide bonds link Cys31-Cys82, Cys35-Cys55, Cys41-Cys65, and Cys45-Cys67. Arg84 is a propeptide (removed by a carboxypeptidase).

Belongs to the long (4 C-C) scorpion toxin superfamily. Sodium channel inhibitor family. Alpha subfamily. In terms of tissue distribution, expressed by the venom gland.

The protein resides in the secreted. In terms of biological role, alpha toxins bind voltage-independently at site-3 of sodium channels (Nav) and inhibit the inactivation of the activated channels thereby blocking neuronal transmission. This toxin is active against both mammals and insects, and is classified as an alpha-like toxin. It is active on Nav1.2/SCN2A (EC(50)=139-252 nM), Nav1.3/SCN3A (EC(50)=565 nM), Nav1.4/SCN4A and Nav1.5/SCN5A (EC(50)=195-500 nM), Nav1.6/SCN8A (EC(50)=214 nM), and drosophila DmNav1 (EC(50)=30 nM). In mNav1.6/SCN8A, the toxin induces a large increase in both transient and persistent currents, which correlates with a prominent reduction in the fast component of inactivating current. In rNav1.2/SCN2A and rNav1.3/SCN3A, toxin-increased currents is much smaller. Moreover, the toxin only accelerates the slow inactivation development and delay recovery of mNav1.6/SCN8A through binding to the channel in the open state. Is 6-fold more toxic than BmK-M2. In vivo, intrahippocampal injection into rat induces epileptiform responses. In addition, intraplantar injection into rat induces spontaneous nociception and hyperalgesia. This is Alpha-like toxin BmK M1 from Olivierus martensii (Manchurian scorpion).